Reading from the N-terminus, the 851-residue chain is Molybdenum cofactor sulfurase (851 aa).

N6-(pyridoxal phosphate)lysine is present on K249. C413 is a catalytic residue. Residues 665–844 (QYLRKFVMPG…LMVGDIVTPS (180 aa)) enclose the MOSC domain.

The protein belongs to the class-V pyridoxal-phosphate-dependent aminotransferase family. MOCOS subfamily. Requires pyridoxal 5'-phosphate as cofactor.

It catalyses the reaction Mo-molybdopterin + L-cysteine + AH2 = thio-Mo-molybdopterin + L-alanine + A + H2O. The protein operates within cofactor biosynthesis; molybdopterin biosynthesis. Functionally, sulfurates the molybdenum cofactor. Sulfation of molybdenum is essential for xanthine dehydrogenase (XDH) and aldehyde oxidase (ADO) enzymes in which molybdenum cofactor is liganded by 1 oxygen and 1 sulfur atom in active form. The chain is Molybdenum cofactor sulfurase from Neosartorya fischeri (strain ATCC 1020 / DSM 3700 / CBS 544.65 / FGSC A1164 / JCM 1740 / NRRL 181 / WB 181) (Aspergillus fischerianus).